Consider the following 467-residue polypeptide: UDP-N-acetylmuramate--L-alanine ligase (467 aa).

Position 114 to 120 (114 to 120 (GTHGKTT)) interacts with ATP.

Belongs to the MurCDEF family.

The protein resides in the cytoplasm. The enzyme catalyses UDP-N-acetyl-alpha-D-muramate + L-alanine + ATP = UDP-N-acetyl-alpha-D-muramoyl-L-alanine + ADP + phosphate + H(+). Its pathway is cell wall biogenesis; peptidoglycan biosynthesis. Functionally, cell wall formation. This Chlorobium chlorochromatii (strain CaD3) protein is UDP-N-acetylmuramate--L-alanine ligase.